Consider the following 493-residue polypeptide: Accumulates dyads protein 4 (493 aa).

As to quaternary structure, interacts with CNM67, SPO21/MPC70 and NUD1.

It is found in the cytoplasm. Its subcellular location is the cytoskeleton. It localises to the microtubule organizing center. The protein resides in the spindle pole body. Functionally, involved in the pathway that organizes the shaping and sizing of the prospore membrane (PSM) during sporulation. May be required to stabilize the outer plaque of the spindle pole body (SPB). The protein is Accumulates dyads protein 4 (ADY4) of Saccharomyces cerevisiae (strain ATCC 204508 / S288c) (Baker's yeast).